Here is a 73-residue protein sequence, read N- to C-terminus: Small ribosomal subunit protein bS18c (73 aa).

This sequence belongs to the bacterial ribosomal protein bS18 family. In terms of assembly, part of the 30S ribosomal subunit.

Its subcellular location is the plastid. The protein localises to the chloroplast. In Rhodomonas salina (Cryptomonas salina), this protein is Small ribosomal subunit protein bS18c.